We begin with the raw amino-acid sequence, 1298 residues long: Activating molecule in BECN1-regulated autophagy protein 1 (1298 aa).

The tract at residues 1-22 (MKVVPEKNAVRILWGRERGARA) is interaction with DDB1. A Glycyl lysine isopeptide (Lys-Gly) (interchain with G-Cter in ubiquitin) cross-link involves residue Lys-45. WD repeat units lie at residues 51-90 (DSPR…CVHS), 93-133 (GHRR…ESWF), and 135-175 (DSNN…AVVK). Phosphoserine; by MTOR is present on Ser-52. Positions 254 to 266 (IQVGEQSTVQDSA) are enriched in polar residues. Positions 254-284 (IQVGEQSTVQDSATPSPPPPPPQPSTERPRT) are disordered. Residues 268 to 277 (PSPPPPPPQP) show a composition bias toward pro residues. The PxP motif 1 signature appears at 275–281 (PQPSTER). Ser-328 bears the Phosphoserine mark. Positions 343–413 (FVQTEPFHPP…SRYHREIAPG (71 aa)) are disordered. Polar residues predominate over residues 354–385 (QASSTQQDQGLLNRPSAFSTVQSSTAGNTLRN). Ser-394 and Ser-443 each carry phosphoserine. 3 stretches are compositionally biased toward polar residues: residues 458-467 (SQASVYTSAT), 547-561 (HQPT…SNLS), and 590-601 (NYSSGEASSSWQ). Disordered regions lie at residues 458-494 (SQAS…NSGS), 538-561 (IESE…SNLS), 590-690 (NYSS…DSLR), and 747-796 (RYQQ…NARM). Composition is skewed to low complexity over residues 602–614 (VPSS…SSGS) and 628–639 (SSSRLELSSSAS). 2 positions are modified to phosphoserine: Ser-635 and Ser-639. The segment covering 661 to 674 (YTQSSRSGTVSQEA) has biased composition (polar residues). Residue Arg-747 is modified to Asymmetric dimethylarginine. Acidic residues predominate over residues 772-781 (TDLEFEDFED). A Phosphoserine; by IKKA modification is found at Ser-1043. Positions 1043–1052 (SGVEYYWDQL) match the LIR motif. Positions 1060–1075 (HSNSRSSERPGTSRAT) are enriched in polar residues. The interval 1060–1079 (HSNSRSSERPGTSRATWRTD) is disordered. 2 short sequence motifs (TQT motif) span residues 1104–1106 (TQT) and 1116–1118 (TQT). Disordered stretches follow at residues 1112-1143 (QNAE…YGAS), 1190-1214 (RSSQ…SRGL), and 1227-1298 (SPRT…PRNR). Residues 1191–1212 (SSQTGTEPGAAHTSSPQPSTSR) are compositionally biased toward polar residues. Ser-1205 bears the Phosphoserine mark. The short motif at 1206–1212 (PQPSTSR) is the PxP motif 2 element.

It belongs to the WD repeat AMBRA1 family. As to quaternary structure, component of the DCX(AMBRA1) E3 ubiquitin ligase complex, also named CRL4(AMBRA1), at least composed of CUL4 (CUL4A or CUL4B), DDB1, AMBRA1 and RBX1. Interacts with BECN1. Probably forms a complex with BECN1 and PIK3C3. Interacts with BECN2. Interacts with BCL2; leading to prevent interaction with BCN1 and autophagy, interaction is disrupted upon autophagy induction. Interacts with ULK1. Interacts (via PxP motifs) with PPP2CA; enhancing interaction between PPP2CA and MYC or FOXO3. Forms a complex with PPP2CA and BECN1; AMBRA1 and BECN1 components of the complex regulate MYC stability via different pathways. Interacts (TQT motifs) with DYNLL1 and DYNLL2; tethering AMBRA1 and the BECN1-PIK3C3 complex in absence of autophagy. Interacts with TRAF6; interaction is required to mediate 'Lys-63'-linked ubiquitination of ULK1. Interacts with TRIM32; promoting activation of ULK1 by TRIM32 via unanchored 'Lys-63'-linked polyubiquitin chains. Interacts with PRKN. Interacts (via LIR motif) with LC3 (MAP1LC3A, MAP1LC3B or MAP1LC3C). Interacts with HUWE1. Interacts with PTK2/FAK. Interacts with SRC; required for SRC trafficking to autophagosomes. Phosphorylation at Ser-52 by MTOR inhibits its ability to regulate autophagy and mediate ubiquitination of ULK1. Phosphorylation by ULK1 in response to autophagy induction abolishes interaction with DYNLL1 and DYNLL2, releasing AMBRA1 from the cytoskeletal docking site to induce autophagosome nucleation. Phosphorylation by MTOR inhibits interaction with PPP2CA and subsequent dephosphorylation of MYC. Phosphorylation at Ser-1043 by CHUK/IKKA promotes its interaction with ATG8 family proteins GABARAP and MAP1LC3B and its mitophagic activity. Post-translationally, ubiquitinated by RNF2 via 'Lys-48'-linkage in unstressed cells, leading to its degradation by the proteasome. Induction of autophagy promotes stabilization via interaction with CUL4 (CUL4A or CUL4B) and DDB1. Upon prolonged starvation, ubiquitinated and degraded, terminating the autophagy response. In terms of processing, undergoes proteolytic processing by caspase-6 (CASP6), caspase-7 (CASP7) and caspase-8 (CASP8) during apoptosis, resulting in the dismantling of the autophagic machinery and the accomplishment of the programmed cell death program. Also cleaved by calpains during apoptosis, which mediate a complete proteolytic degradation.

Its subcellular location is the endoplasmic reticulum. It is found in the cytoplasm. It localises to the cytoskeleton. The protein localises to the cytoplasmic vesicle. The protein resides in the autophagosome. Its subcellular location is the mitochondrion. It is found in the cytosol. It localises to the nucleus. The protein localises to the cell junction. The protein resides in the focal adhesion. It functions in the pathway protein modification; protein ubiquitination. Substrate-recognition component of a DCX (DDB1-CUL4-X-box) E3 ubiquitin-protein ligase complex involved in cell cycle control and autophagy. The DCX(AMBRA1) complex specifically mediates the polyubiquitination of target proteins such as BECN1, CCND1, CCND2, CCND3, ELOC and ULK1. Acts as an upstream master regulator of the transition from G1 to S cell phase: AMBRA1 specifically recognizes and binds phosphorylated cyclin-D (CCND1, CCND2 and CCND3), leading to cyclin-D ubiquitination by the DCX(AMBRA1) complex and subsequent degradation. By controlling the transition from G1 to S phase and cyclin-D degradation, AMBRA1 acts as a tumor suppressor that promotes genomic integrity during DNA replication and counteracts developmental abnormalities and tumor growth. AMBRA1 also regulates the cell cycle by promoting MYC dephosphorylation and degradation independently of the DCX(AMBRA1) complex: acts via interaction with the catalytic subunit of protein phosphatase 2A (PPP2CA), which enhances interaction between PPP2CA and MYC, leading to MYC dephosphorylation and degradation. Acts as a regulator of Cul5-RING (CRL5) E3 ubiquitin-protein ligase complexes by mediating ubiquitination and degradation of Elongin-C (ELOC) component of CRL5 complexes. Acts as a key regulator of autophagy by modulating the BECN1-PIK3C3 complex: controls protein turnover during neuronal development, and regulates normal cell survival and proliferation. In normal conditions, AMBRA1 is tethered to the cytoskeleton via interaction with dyneins DYNLL1 and DYNLL2. Upon autophagy induction, AMBRA1 is released from the cytoskeletal docking site to induce autophagosome nucleation by mediating ubiquitination of proteins involved in autophagy. The DCX(AMBRA1) complex mediates 'Lys-63'-linked ubiquitination of BECN1, increasing the association between BECN1 and PIK3C3 to promote PIK3C3 activity. In collaboration with TRAF6, AMBRA1 mediates 'Lys-63'-linked ubiquitination of ULK1 following autophagy induction, promoting ULK1 stability and kinase activity. Also activates ULK1 via interaction with TRIM32: TRIM32 stimulates ULK1 through unanchored 'Lys-63'-linked polyubiquitin chains. Also acts as an activator of mitophagy via interaction with PRKN and LC3 proteins (MAP1LC3A, MAP1LC3B or MAP1LC3C); possibly by bringing damaged mitochondria onto autophagosomes. Also activates mitophagy by acting as a cofactor for HUWE1; acts by promoting HUWE1-mediated ubiquitination of MFN2. AMBRA1 is also involved in regulatory T-cells (Treg) differentiation by promoting FOXO3 dephosphorylation independently of the DCX(AMBRA1) complex: acts via interaction with PPP2CA, which enhances interaction between PPP2CA and FOXO3, leading to FOXO3 dephosphorylation and stabilization. May act as a regulator of intracellular trafficking, regulating the localization of active PTK2/FAK and SRC. Also involved in transcription regulation by acting as a scaffold for protein complexes at chromatin. This is Activating molecule in BECN1-regulated autophagy protein 1 from Homo sapiens (Human).